A 445-amino-acid polypeptide reads, in one-letter code: Homogentisate 1,2-dioxygenase (445 aa).

K98 carries the N6-acetyllysine modification. Positions 335, 341, and 371 each coordinate Fe cation. An N6-succinyllysine modification is found at K414.

This sequence belongs to the homogentisate dioxygenase family. In terms of assembly, homohexamer arranged as a dimer of trimers. Fe cation serves as cofactor. As to expression, highest expression in the prostate, small intestine, colon, kidney and liver.

It catalyses the reaction homogentisate + O2 = 4-maleylacetoacetate + H(+). It functions in the pathway amino-acid degradation; L-phenylalanine degradation; acetoacetate and fumarate from L-phenylalanine: step 4/6. Functionally, catalyzes the conversion of homogentisate to maleylacetoacetate. The chain is Homogentisate 1,2-dioxygenase (HGD) from Homo sapiens (Human).